A 113-amino-acid chain; its full sequence is Large ribosomal subunit protein uL24 (113 aa).

This sequence belongs to the universal ribosomal protein uL24 family. As to quaternary structure, part of the 50S ribosomal subunit.

One of two assembly initiator proteins, it binds directly to the 5'-end of the 23S rRNA, where it nucleates assembly of the 50S subunit. Its function is as follows. One of the proteins that surrounds the polypeptide exit tunnel on the outside of the subunit. In Chlamydia abortus (strain DSM 27085 / S26/3) (Chlamydophila abortus), this protein is Large ribosomal subunit protein uL24.